We begin with the raw amino-acid sequence, 197 residues long: RILP-like protein 2 (197 aa).

The interval 1–24 (MEDHPVREEEDGEEDEGALAKSPL) is disordered. Acidic residues predominate over residues 8-17 (EEEDGEEDEG). Residues 14-96 (EDEGALAKSP…KQEVEGLRKA (83 aa)) enclose the RH1 domain. The stretch at 69-153 (VNEGSLAVEE…VQEELQCYRS (85 aa)) forms a coiled coil. One can recognise an RH2 domain in the interval 119 to 184 (RPRFTLQELR…GNGEKEERTI (66 aa)).

Belongs to the RILPL family. As to quaternary structure, homodimer. Interacts with RAC1. Interacts (via N-terminus) with MYO5A, the interaction is required for its role in dendrite formation. Interacts with RAB8A; interaction is dependent on the phosphorylation of RAB8A on 'Thr-72'. Interacts with RAB10 and RAB12; interaction is dependent on the phosphorylation of 'Thr-73' on RAB10 and 'Ser-105' on RAB12.

Its subcellular location is the cytoplasm. The protein resides in the cytosol. It is found in the cytoskeleton. It localises to the microtubule organizing center. The protein localises to the centrosome. Its subcellular location is the cell projection. The protein resides in the cilium. Involved in cell shape and neuronal morphogenesis, positively regulating the establishment and maintenance of dendritic spines. Plays a role in cellular protein transport, including protein transport away from primary cilia. May function via activation of RAC1 and PAK1. The polypeptide is RILP-like protein 2 (Rilpl2) (Mus musculus (Mouse)).